The following is a 189-amino-acid chain: MLDSIVYFFNKSGFVTTLVLVWISLYLVMTLWVFLYKSIALKIELKREMQSLSNILNGAQDAPEHFMFNKKRNDETKRYSNELLQAWKHQVLKQSTTGLVVLSIISSTAPFIGLFGTVVEILEAFNNLGTLGQASFGVIAPIISKALIATAAGILAAIPAYSFYLILKRKVYDLSVYVQMQVDILSSKK.

Helical transmembrane passes span F14–F34, L99–V119, and L147–L167.

Belongs to the ExbB/TolQ family.

The protein resides in the cell inner membrane. The polypeptide is Putative biopolymer transport protein ExbB-like 1 (Helicobacter pylori (strain ATCC 700392 / 26695) (Campylobacter pylori)).